The sequence spans 325 residues: Elongation factor P--(R)-beta-lysine ligase (325 aa).

A substrate-binding site is contributed by 76–78 (SPE). Residues 100–102 (RNE) and Asn-109 contribute to the ATP site. Position 118 (Tyr-118) interacts with substrate. 244–245 (EL) is an ATP binding site. A substrate-binding site is contributed by Glu-251. An ATP-binding site is contributed by Gly-300.

It belongs to the class-II aminoacyl-tRNA synthetase family. EpmA subfamily. As to quaternary structure, homodimer.

The enzyme catalyses D-beta-lysine + L-lysyl-[protein] + ATP = N(6)-((3R)-3,6-diaminohexanoyl)-L-lysyl-[protein] + AMP + diphosphate + H(+). Functionally, with EpmB is involved in the beta-lysylation step of the post-translational modification of translation elongation factor P (EF-P). Catalyzes the ATP-dependent activation of (R)-beta-lysine produced by EpmB, forming a lysyl-adenylate, from which the beta-lysyl moiety is then transferred to the epsilon-amino group of a conserved specific lysine residue in EF-P. In Proteus mirabilis (strain HI4320), this protein is Elongation factor P--(R)-beta-lysine ligase.